We begin with the raw amino-acid sequence, 559 residues long: Urocanate hydratase (559 aa).

Residues 53-54 (GG), Q131, 177-179 (GMG), E197, R202, 243-244 (NA), 264-268 (QTSAH), 274-275 (YL), and Y323 contribute to the NAD(+) site. C411 is a catalytic residue. G493 contributes to the NAD(+) binding site.

Belongs to the urocanase family. Requires NAD(+) as cofactor.

The protein localises to the cytoplasm. It catalyses the reaction 4-imidazolone-5-propanoate = trans-urocanate + H2O. It functions in the pathway amino-acid degradation; L-histidine degradation into L-glutamate; N-formimidoyl-L-glutamate from L-histidine: step 2/3. Functionally, catalyzes the conversion of urocanate to 4-imidazolone-5-propionate. The chain is Urocanate hydratase from Pseudomonas aeruginosa (strain LESB58).